Consider the following 189-residue polypeptide: Streptothricin acetyltransferase (189 aa).

In terms of domain architecture, N-acetyltransferase spans 44 to 189; sequence FALREVPADP…HALYMSMPCP (146 aa). The interval 55–76 is disordered; the sequence is LVKVFPDDGGSDGEDGAEGEDA. The segment covering 63–75 has biased composition (acidic residues); the sequence is GGSDGEDGAEGED.

The protein belongs to the acetyltransferase family. GNAT subfamily.

It catalyses the reaction streptothricin F + acetyl-CoA = N(beta)-acetylstreptothricin F + CoA + H(+). In terms of biological role, involved in resistance to streptothricin, a broad-spectrum antibiotic produced by streptomycetes. Detoxifies streptothricin via acetylation of the beta amino group of the first beta-lysyl moiety of streptothricin. This is Streptothricin acetyltransferase from Streptomyces lavendulae.